The sequence spans 154 residues: Insulin-like growth factor 1 (154 aa).

The b stretch occupies residues 50–78 (GPETLCGAELVDALQFVCGDRGFYFNKPT). Disulfide bonds link Cys55–Cys97, Cys67–Cys110, and Cys96–Cys101. Positions 79 to 90 (GYGSSSRRAPQT) are c. Positions 91–111 (GIVDECCFRSCDLRRLEMYCA) are a. Positions 112-119 (PLKPAKSA) are d. A propeptide spans 120–154 (RSVRAQRHTDMPKAQKEVHLKNTSRGSAGNKNYRM) (e peptide). The segment at 121-154 (SVRAQRHTDMPKAQKEVHLKNTSRGSAGNKNYRM) is disordered. Positions 126-139 (RHTDMPKAQKEVHL) are enriched in basic and acidic residues. Polar residues predominate over residues 140-154 (KNTSRGSAGNKNYRM).

This sequence belongs to the insulin family. In terms of assembly, forms a ternary complex with IGFR1 and ITGAV:ITGB3. Forms a ternary complex with IGFR1 and ITGA6:ITGB4. Forms a ternary complex with IGFBP3 and ALS.

It localises to the secreted. Functionally, the insulin-like growth factors, isolated from plasma, are structurally and functionally related to insulin but have a much higher growth-promoting activity. May be a physiological regulator of [1-14C]-2-deoxy-D-glucose (2DG) transport and glycogen synthesis in osteoblasts. Stimulates glucose transport in bone-derived osteoblastic (PyMS) cells and is effective at much lower concentrations than insulin, not only regarding glycogen and DNA synthesis but also with regard to enhancing glucose uptake. May play a role in synapse maturation. Ca(2+)-dependent exocytosis of IGF1 is required for sensory perception of smell in the olfactory bulb. Acts as a ligand for IGF1R. Binds to the alpha subunit of IGF1R, leading to the activation of the intrinsic tyrosine kinase activity which autophosphorylates tyrosine residues in the beta subunit thus initiating a cascade of down-stream signaling events leading to activation of the PI3K-AKT/PKB and the Ras-MAPK pathways. Binds to integrins ITGAV:ITGB3 and ITGA6:ITGB4. Its binding to integrins and subsequent ternary complex formation with integrins and IGFR1 are essential for IGF1 signaling. Induces the phosphorylation and activation of IGFR1, MAPK3/ERK1, MAPK1/ERK2 and AKT1. As part of the MAPK/ERK signaling pathway, acts as a negative regulator of apoptosis in cardiomyocytes via promotion of STUB1/CHIP-mediated ubiquitination and degradation of ICER-type isoforms of CREM. This chain is Insulin-like growth factor 1, found in Bos taurus (Bovine).